The chain runs to 289 residues: Rhomboid-type serine protease 2 (289 aa).

Helical transmembrane passes span 26–46, 67–87, 100–120, 122–142, 157–179, and 184–203; these read VVIIAIVGFWLAGLQSIVDIQ, FPFIHLNIFHAVMNILALTPL, CLALFFGPLTTIPAFLYIGLE, FVFGNNVAVMGASMWVFLLLG, IGTYSIPTWTTPIGVLFAMAVLV, and FWGHAAGLVIGYGGMFSSTL. The Nucleophile role is filled by serine 134. Histidine 187 is a catalytic residue.

It belongs to the peptidase S54 family.

It is found in the golgi apparatus membrane. Its subcellular location is the golgi apparatus. The protein resides in the cis-Golgi network membrane. The catalysed reaction is Cleaves type-1 transmembrane domains using a catalytic dyad composed of serine and histidine that are contributed by different transmembrane domains.. In terms of biological role, probable rhomboid-type serine protease that catalyzes intramembrane proteolysis. This Podospora anserina (Pleurage anserina) protein is Rhomboid-type serine protease 2 (RBD2).